The sequence spans 1117 residues: A disintegrin and metalloproteinase with thrombospondin motifs 6 (1117 aa).

A signal peptide spans 1–21; that stretch reads MEILWKTLTWILSLIMASSEF. The propeptide occupies 22 to 244; sequence HSDHRLSYSS…NTHIHHRQKR (223 aa). Asn-99, Asn-172, Asn-222, and Asn-234 each carry an N-linked (GlcNAc...) asparagine glycan. A Peptidase M12B domain is found at 250–468; it reads RFVETLVVAD…GRGTCLDNEP (219 aa). 11 cysteine pairs are disulfide-bonded: Cys-326–Cys-387, Cys-362–Cys-369, Cys-381–Cys-463, Cys-420–Cys-447, Cys-490–Cys-512, Cys-501–Cys-519, Cys-507–Cys-542, Cys-532–Cys-547, Cys-570–Cys-607, Cys-574–Cys-612, and Cys-585–Cys-597. His-403 contributes to the Zn(2+) binding site. Glu-404 is a catalytic residue. Residues His-407 and His-413 each contribute to the Zn(2+) site. Positions 495–557 constitute a Disintegrin domain; it reads GATSRQCKYG…VPFGTWPQSI (63 aa). The region spanning 558–613 is the TSP type-1 1 domain; that stretch reads DGGWGPWSLWGECSRTCGGGVSSSLRHCDSPAPSGGGKYCLGERKRYRSCNTDPCP. The segment at 717 to 843 is spacer; that stretch reads DAIEGFFNDS…GSGDNEVGFT (127 aa). The N-linked (GlcNAc...) asparagine glycan is linked to Asn-724. TSP type-1 domains follow at residues 840-900, 902-960, 962-1007, and 1018-1073; these read VGFT…EPCP, EWFI…QSCP, QWVA…SKPP, and PPPR…SKCD. Intrachain disulfides connect Cys-911–Cys-954, Cys-915–Cys-959, and Cys-926–Cys-943. Asn-956 carries an N-linked (GlcNAc...) asparagine glycan. In terms of domain architecture, PLAC spans 1079–1117; it reads NTEECKDVNKVAYCPLVLKFKFCSRAYFRQMCCKTCQGH.

Zn(2+) is required as a cofactor. Post-translationally, the precursor is cleaved by a furin endopeptidase. In terms of processing, glycosylated. Can be O-fucosylated by POFUT2 on a serine or a threonine residue found within the consensus sequence C1-X(2)-(S/T)-C2-G of the TSP type-1 repeat domains where C1 and C2 are the first and second cysteine residue of the repeat, respectively. Fucosylated repeats can then be further glycosylated by the addition of a beta-1,3-glucose residue by the glucosyltransferase, B3GALTL. Fucosylation mediates the efficient secretion of ADAMTS family members. Can also be C-glycosylated with one or two mannose molecules on tryptophan residues within the consensus sequence W-X-X-W of the TPRs, and N-glycosylated. These other glycosylations can also facilitate secretion. Expressed at low levels in placenta and barely detectable in a number of other tissues.

Its subcellular location is the secreted. It localises to the extracellular space. The protein localises to the extracellular matrix. This is A disintegrin and metalloproteinase with thrombospondin motifs 6 (ADAMTS6) from Homo sapiens (Human).